A 458-amino-acid chain; its full sequence is Succinate-semialdehyde dehydrogenase [NADP(+)] 1 (458 aa).

Residues 134 to 135 (WN), 158 to 161 (KHAS), and 210 to 211 (GS) contribute to the NADP(+) site. Catalysis depends on Glu232, which acts as the Proton acceptor. Leu233 provides a ligand contact to NADP(+). The active-site Nucleophile is the Cys266. Glu363 contacts NADP(+).

This sequence belongs to the aldehyde dehydrogenase family.

It catalyses the reaction succinate semialdehyde + NADP(+) + H2O = succinate + NADPH + 2 H(+). Its function is as follows. Catalyzes the NADP(+)-dependent oxidation of succinate semialdehyde to succinate. It is believed to be the main source of succinate semialdehyde dehydrogenase activity in Mycobacterium. In Mycobacterium ulcerans (strain Agy99), this protein is Succinate-semialdehyde dehydrogenase [NADP(+)] 1 (gabD1).